Reading from the N-terminus, the 227-residue chain is tRNA (guanine-N(7)-)-methyltransferase (227 aa).

Positions 57, 82, 109, and 132 each coordinate S-adenosyl-L-methionine. Residue Asp132 is part of the active site. Residues Lys136, Asp168, and Thr205–Glu208 contribute to the substrate site.

The protein belongs to the class I-like SAM-binding methyltransferase superfamily. TrmB family.

It catalyses the reaction guanosine(46) in tRNA + S-adenosyl-L-methionine = N(7)-methylguanosine(46) in tRNA + S-adenosyl-L-homocysteine. It participates in tRNA modification; N(7)-methylguanine-tRNA biosynthesis. Its function is as follows. Catalyzes the formation of N(7)-methylguanine at position 46 (m7G46) in tRNA. The chain is tRNA (guanine-N(7)-)-methyltransferase from Leifsonia xyli subsp. xyli (strain CTCB07).